Reading from the N-terminus, the 123-residue chain is MIQVQTILNVADNSGARLVMCIKVLGGSRRRYANIGDIIKVAIKEAIPRGKVKKGEVVKAVVVRTKKGIRRTDGSMICFDNNSCVIVHDTTNQPIGTRIFGPVTRELRVEKFMKIISLAPEVL.

This sequence belongs to the universal ribosomal protein uL14 family. As to quaternary structure, part of the 50S ribosomal subunit. Forms a cluster with proteins L3 and L19. In the 70S ribosome, L14 and L19 interact and together make contacts with the 16S rRNA in bridges B5 and B8.

Binds to 23S rRNA. Forms part of two intersubunit bridges in the 70S ribosome. The sequence is that of Large ribosomal subunit protein uL14 from Buchnera aphidicola subsp. Cinara cedri (strain Cc).